Consider the following 58-residue polypeptide: Large ribosomal subunit protein bL32 (58 aa).

This sequence belongs to the bacterial ribosomal protein bL32 family.

The polypeptide is Large ribosomal subunit protein bL32 (Ligilactobacillus salivarius (strain UCC118) (Lactobacillus salivarius)).